Here is a 456-residue protein sequence, read N- to C-terminus: Exodeoxyribonuclease 7 large subunit (456 aa).

The protein belongs to the XseA family. Heterooligomer composed of large and small subunits.

It localises to the cytoplasm. The catalysed reaction is Exonucleolytic cleavage in either 5'- to 3'- or 3'- to 5'-direction to yield nucleoside 5'-phosphates.. Functionally, bidirectionally degrades single-stranded DNA into large acid-insoluble oligonucleotides, which are then degraded further into small acid-soluble oligonucleotides. This is Exodeoxyribonuclease 7 large subunit from Shigella flexneri serotype 5b (strain 8401).